The chain runs to 165 residues: Small ribosomal subunit protein uS5 (165 aa).

In terms of domain architecture, S5 DRBM spans 13–76; it reads LEEKVLVVNR…EAARKNLITI (64 aa).

Belongs to the universal ribosomal protein uS5 family. In terms of assembly, part of the 30S ribosomal subunit. Contacts proteins S4 and S8.

In terms of biological role, with S4 and S12 plays an important role in translational accuracy. Located at the back of the 30S subunit body where it stabilizes the conformation of the head with respect to the body. The protein is Small ribosomal subunit protein uS5 of Chlamydia caviae (strain ATCC VR-813 / DSM 19441 / 03DC25 / GPIC) (Chlamydophila caviae).